The following is a 439-amino-acid chain: ATP-dependent RNA helicase RhlB (439 aa).

A Q motif motif is present at residues 9 to 37; that stretch reads QKFADLPLHPEVKQALAENGFEFCTPIQA. The 180-residue stretch at 40–219 folds into the Helicase ATP-binding domain; sequence LPVLLQSKDI…YDHMNDPVKV (180 aa). ATP is bound at residue 53-60; it reads AQTGTGKT. A DEAD box motif is present at residues 165-168; it reads DEAD. The Helicase C-terminal domain occupies 243–390; the sequence is KMRLLLTLIE…VSNYDRDALL (148 aa). Residues 395 to 439 are disordered; it reads SPVKIHRKHPAGARNLRERSGAGRTPGAHRSGGRPPRHDRTRRQP. A compositionally biased stretch (basic residues) spans 425 to 439; that stretch reads SGGRPPRHDRTRRQP.

The protein belongs to the DEAD box helicase family. RhlB subfamily. As to quaternary structure, component of the RNA degradosome, which is a multiprotein complex involved in RNA processing and mRNA degradation.

It localises to the cytoplasm. The enzyme catalyses ATP + H2O = ADP + phosphate + H(+). Functionally, DEAD-box RNA helicase involved in RNA degradation. Has RNA-dependent ATPase activity and unwinds double-stranded RNA. This Shewanella oneidensis (strain ATCC 700550 / JCM 31522 / CIP 106686 / LMG 19005 / NCIMB 14063 / MR-1) protein is ATP-dependent RNA helicase RhlB.